Consider the following 222-residue polypeptide: UPF0758 protein YicR (222 aa).

An MPN domain is found at 100-222; that stretch reads PLLSPEMTRE…YVSFAERGWI (123 aa). Zn(2+)-binding residues include histidine 171, histidine 173, and aspartate 184. A JAMM motif motif is present at residues 171–184; it reads HNHPSGCAEPSKAD.

This sequence belongs to the UPF0758 family. YicR subfamily.

This Escherichia coli (strain 55989 / EAEC) protein is UPF0758 protein YicR.